Here is a 315-residue protein sequence, read N- to C-terminus: Ribosomal RNA small subunit methyltransferase H (315 aa).

Residues 61-63 (GGH), Asp80, Phe108, Asp124, and Gln131 contribute to the S-adenosyl-L-methionine site. The tract at residues 291 to 315 (PQPEEEEKNPRSRSAKLRFAQRKPL) is disordered. The segment covering 301–315 (RSRSAKLRFAQRKPL) has biased composition (basic residues).

This sequence belongs to the methyltransferase superfamily. RsmH family.

It is found in the cytoplasm. The enzyme catalyses cytidine(1402) in 16S rRNA + S-adenosyl-L-methionine = N(4)-methylcytidine(1402) in 16S rRNA + S-adenosyl-L-homocysteine + H(+). Its function is as follows. Specifically methylates the N4 position of cytidine in position 1402 (C1402) of 16S rRNA. This chain is Ribosomal RNA small subunit methyltransferase H, found in Crocosphaera subtropica (strain ATCC 51142 / BH68) (Cyanothece sp. (strain ATCC 51142)).